The primary structure comprises 483 residues: MEIINVFLFLIILFLVKDFVKKNKKIHTKSPSGPIAFPILGNVVQIRFWELFKIQEHELFGGYSKKYNGVVRAWFGERLFFFVSNYDVVKYFQKDENFHNRPSVLVPGWRYASSNGLGVMSSSDDKWKRAKSSVSQSLRVRTTKKLMEEKAIEFIDSLEKISNNNEIFYPKGHIQGYACSMLFKYMFNQDLSVESGMSRTIGNAVEHVFGNLSKLTAFDCFEIFSPLYDWFFTRRLKGCDIVRQIISSQNENHLKSIDPSKPRDLMDDLLIEYGLNEITKEDTMQINQICFDIFGPAVGTVTITMNWVILQLCNRPELQEIAYQEIKKAVKDDEYVNLNHKQNAPYIVAFIKETMRLCSNGFGLPRTAKNDQICGDFFIPKDAIIFINYLEISQNEEIFKNAKEFNPTRYLDESLPVPNIHFGVGQRACPGRFVAIDKMFLGISNLLLKYKLKTQNGEKIDDSIQFSVSLKAKDYGIKLEKRI.

A helical transmembrane segment spans residues 1–21 (MEIINVFLFLIILFLVKDFVK). Heme is bound at residue Cys429.

This sequence belongs to the cytochrome P450 family. It depends on heme as a cofactor.

The protein localises to the membrane. This is Probable cytochrome P450 517A1 (cyp517A1) from Dictyostelium discoideum (Social amoeba).